A 486-amino-acid polypeptide reads, in one-letter code: Glutamyl-tRNA(Gln) amidotransferase subunit A (486 aa).

Residues Lys-79 and Ser-154 each act as charge relay system in the active site. Ser-178 (acyl-ester intermediate) is an active-site residue.

It belongs to the amidase family. GatA subfamily. Heterotrimer of A, B and C subunits.

It carries out the reaction L-glutamyl-tRNA(Gln) + L-glutamine + ATP + H2O = L-glutaminyl-tRNA(Gln) + L-glutamate + ADP + phosphate + H(+). Allows the formation of correctly charged Gln-tRNA(Gln) through the transamidation of misacylated Glu-tRNA(Gln) in organisms which lack glutaminyl-tRNA synthetase. The reaction takes place in the presence of glutamine and ATP through an activated gamma-phospho-Glu-tRNA(Gln). This Myxococcus xanthus (strain DK1622) protein is Glutamyl-tRNA(Gln) amidotransferase subunit A.